The chain runs to 428 residues: Enolase (428 aa).

Glutamine 163 contacts (2R)-2-phosphoglycerate. The active-site Proton donor is the glutamate 205. 3 residues coordinate Mg(2+): aspartate 242, glutamate 286, and aspartate 313. (2R)-2-phosphoglycerate is bound by residues lysine 338, arginine 367, serine 368, and lysine 389. Catalysis depends on lysine 338, which acts as the Proton acceptor.

The protein belongs to the enolase family. Requires Mg(2+) as cofactor.

Its subcellular location is the cytoplasm. It is found in the secreted. The protein localises to the cell surface. It catalyses the reaction (2R)-2-phosphoglycerate = phosphoenolpyruvate + H2O. Its pathway is carbohydrate degradation; glycolysis; pyruvate from D-glyceraldehyde 3-phosphate: step 4/5. Catalyzes the reversible conversion of 2-phosphoglycerate (2-PG) into phosphoenolpyruvate (PEP). It is essential for the degradation of carbohydrates via glycolysis. The polypeptide is Enolase (Lactobacillus acidophilus (strain ATCC 700396 / NCK56 / N2 / NCFM)).